A 611-amino-acid polypeptide reads, in one-letter code: Adenosylhomocysteinase 3 (611 aa).

Low complexity-rich tracts occupy residues 1 to 14 (MSVQVVSAAAAAKV), 36 to 57 (AAVGAMAPPAGGGDPEAPAPAA), and 68 to 81 (GPAAALSPAAGKVP). The tract at residues 1 to 184 (MSVQVVSAAA…KQQKNSKGSS (184 aa)) is disordered. Ser-2 carries the post-translational modification N-acetylserine. The LISN domain, inhibits interaction with ITPR1 stretch occupies residues 2–109 (SVQVVSAAAA…DGGEALVSPD (108 aa)). Ser-107 is subject to Phosphoserine. Over residues 135 to 144 (RPTKIGRRSL) the composition is skewed to basic residues. Residues 145–164 (SRSISQSSTDSYSSAASYTD) are compositionally biased toward low complexity. A phosphoserine mark is found at Ser-149, Ser-152, Ser-155, and Ser-158. Substrate is bound by residues Thr-236, Asp-310, and Glu-335. 336 to 338 (SVT) serves as a coordination point for NAD(+). Substrate-binding residues include Lys-365 and Asp-369. Residues Asn-370, 401–406 (GEVGKG), Glu-422, Asn-457, 478–479 (MG), and Asn-525 contribute to the NAD(+) site.

This sequence belongs to the adenosylhomocysteinase family. In terms of assembly, homotetramer. Forms heteromultimers with AHCYL1 (via the C-terminal region). Interacts with ITPR1; with lower affinity than AHCYL1 and maybe via ITPR1. Interacts with SLC4A4. Interacts with ZCCHC4. NAD(+) serves as cofactor. Phosphorylated during neuronal differentiation at the LISN domain.

It is found in the cytoplasm. Its subcellular location is the microsome. The enzyme catalyses S-adenosyl-L-homocysteine + H2O = L-homocysteine + adenosine. It functions in the pathway amino-acid biosynthesis; L-homocysteine biosynthesis; L-homocysteine from S-adenosyl-L-homocysteine: step 1/1. May regulate the electrogenic sodium/bicarbonate cotransporter SLC4A4 activity and Mg(2+)-sensitivity. On the contrary of its homolog AHCYL1, does not regulate ITPR1 sensitivity to inositol 1,4,5-trisphosphate. The chain is Adenosylhomocysteinase 3 (AHCYL2) from Homo sapiens (Human).